A 466-amino-acid polypeptide reads, in one-letter code: RUS family member 1 (466 aa).

Alanine 2 is modified (N-acetylalanine). Residues 245 to 265 (LLMLPLVSDCPSLSLGCFVLL) traverse the membrane as a helical segment.

Belongs to the RUS1 family.

The protein localises to the membrane. In Mus musculus (Mouse), this protein is RUS family member 1.